Consider the following 101-residue polypeptide: Class II hydrophobin 5 (101 aa).

The N-terminal stretch at 1-15 (MQLTALLALATLAIA) is a signal peptide. Cystine bridges form between Cys33–Cys83, Cys44–Cys74, Cys45–Cys57, and Cys84–Cys95.

It belongs to the cerato-ulmin hydrophobin family. In terms of assembly, homodimer. Homodimers further self-assemble to form highly ordered films at water-air interfaces through intermolecular interactions.

It localises to the secreted. Its subcellular location is the cell wall. Functionally, aerial growth, conidiation, and dispersal of filamentous fungi in the environment rely upon a capability of their secreting small amphipathic proteins called hydrophobins (HPBs) with low sequence identity. Class I can self-assemble into an outermost layer of rodlet bundles on aerial cell surfaces, conferring cellular hydrophobicity that supports fungal growth, development and dispersal; whereas Class II form highly ordered films at water-air interfaces through intermolecular interactions but contribute nothing to the rodlet structure. This Trichoderma asperellum (strain ATCC 204424 / CBS 433.97 / NBRC 101777) protein is Class II hydrophobin 5.